We begin with the raw amino-acid sequence, 357 residues long: Glucose-6-phosphatase catalytic subunit 1 (357 aa).

Over 1-28 (MEKGMNVLHDFGIQSTHYLQVNYQNSQD) the chain is Lumenal. Residues 29-49 (WFILVSVIADLRNAFYVLFPI) traverse the membrane as a helical segment. Topologically, residues 50–60 (WFHLREAVGIK) are cytoplasmic. A helical membrane pass occupies residues 61 to 81 (LLWVAVIGDWLNLVFKWILFG). At 82–117 (QRPYWWVLDTDYYSNTSAPLIKQFPVTCETGPGSPS) the chain is on the lumenal side. Residue arginine 83 coordinates substrate. Asparagine 96 carries N-linked (GlcNAc...) asparagine glycosylation. A helical transmembrane segment spans residues 118–138 (GHAMGTAGVYYVMVTSTLSIF). The active-site Proton donor is the histidine 119. At 139–147 (RGKKKPTYR) the chain is on the cytoplasmic side. The chain crosses the membrane as a helical span at residues 148–168 (FRCLNVMLWLGFWVVQLNVCL). Residues 169-170 (SR) lie on the Lumenal side of the membrane. Position 170 (arginine 170) interacts with substrate. A helical membrane pass occupies residues 171–191 (IYLAAHFPHQVVAGVLSGIAV). Catalysis depends on histidine 176, which acts as the Nucleophile. Residues 192–209 (AETFRHIQSIYNASLKKY) lie on the Cytoplasmic side of the membrane. A helical transmembrane segment spans residues 210–230 (FLITCFLFSFAIGFYLLLKWL). The Lumenal segment spans residues 231–254 (GVDLLWTLEKAKRRCERPEWVHID). A helical membrane pass occupies residues 255–275 (TTPFASLLKNLGTLFGLGLAL). Residues 276–291 (NSSMYRESCKGKLSKW) lie on the Cytoplasmic side of the membrane. A helical transmembrane segment spans residues 292-312 (FPFRLSCIVASLVLLHLFDSL). The Lumenal portion of the chain corresponds to 313-320 (KPPSQIEL). A helical membrane pass occupies residues 321–341 (IFYVLSFCKSAAVPLASVSLI). Over 342–357 (PYCLAWVLGQPNKKTV) the chain is Cytoplasmic. Residues 354–357 (KKTV) carry the Prevents secretion from ER motif.

The protein belongs to the glucose-6-phosphatase family.

It localises to the endoplasmic reticulum membrane. It carries out the reaction D-glucose 6-phosphate + H2O = D-glucose + phosphate. The protein operates within carbohydrate biosynthesis; gluconeogenesis. Its function is as follows. Hydrolyzes glucose-6-phosphate to glucose in the endoplasmic reticulum. Forms with the glucose-6-phosphate transporter (SLC37A4/G6PT) the complex responsible for glucose production in the terminal step of glycogenolysis and gluconeogenesis. Hence, it is the key enzyme in homeostatic regulation of blood glucose levels. The protein is Glucose-6-phosphatase catalytic subunit 1 (G6PC1) of Bos taurus (Bovine).